The primary structure comprises 32 residues: Islet amyloid polypeptide (32 aa).

It belongs to the calcitonin family. In terms of assembly, can form homodimers. Interacts with IDE and INS. Interaction with INS inhibits homodimerization and fibril formation.

It localises to the secreted. Its function is as follows. Amylin/IAPP is a glucoregulatory peptide hormone that plays an important role in the regulation of energy homeostasis. Selectively inhibits insulin-stimulated glucose utilization and glycogen deposition in muscle, while not affecting adipocyte glucose metabolism. IAPP function is mediated by the CALCR-RAMPs (AMYRs) receptor complexes. Amylin can also bind CALCR receptor in the absence of RAMPs, although it is more selective for AMYRs. This Ovis aries (Sheep) protein is Islet amyloid polypeptide (IAPP).